We begin with the raw amino-acid sequence, 83 residues long: Colicin-E5 immunity protein (83 aa).

Functionally, this protein is able to protect a cell, which harbors the plasmid ColE5 encoding colicin E5, against colicin E5. The chain is Colicin-E5 immunity protein (imm) from Escherichia coli.